A 1863-amino-acid polypeptide reads, in one-letter code: 5'-3' DNA helicase ZGRF1 (1863 aa).

Disordered regions lie at residues 78–110 (SRAV…QPSG), 132–196 (ENSE…PLSL), and 300–349 (TQSI…PEAQ). Residues 81 to 90 (VEPDGSREAL) show a composition bias toward basic and acidic residues. Residues 92 to 105 (SGSRTLVSSSRSLG) are compositionally biased toward low complexity. Composition is skewed to polar residues over residues 173 to 185 (PVST…ITFS) and 300 to 321 (TQSI…TTSR). A phosphoserine mark is found at S331 and S445. 3 disordered regions span residues 460 to 496 (PVSP…SKSN), 524 to 545 (TSDT…ERWE), and 610 to 664 (GDVK…GVSP). Residues 533–545 (EDSRLSQDSERWE) are compositionally biased toward basic and acidic residues. Positions 1111, 1113, 1136, and 1144 each coordinate Zn(2+). Residues 1111 to 1153 (CHHNQPAKLVMVKKEGPNKGRLFYTCDKSKDNQCKFFKWLEEV) form a GRF-type zinc finger.

As to quaternary structure, interacts with DNA repair protein RAD51; the interaction promotes RAD51 strand exchange activity. Also interacts with DNA repair proteins EXO1 and BRCA1; the interactions are increased following DNA damage induction.

It is found in the nucleus. The enzyme catalyses ATP + H2O = ADP + phosphate + H(+). It carries out the reaction Couples ATP hydrolysis with the unwinding of duplex DNA at the replication fork by translocating in the 5'-3' direction. This creates two antiparallel DNA single strands (ssDNA). The leading ssDNA polymer is the template for DNA polymerase III holoenzyme which synthesizes a continuous strand.. 5'-3' DNA helicase which is recruited to sites of DNA damage and promotes repair of replication-blocking DNA lesions through stimulation of homologous recombination (HR). Promotes HR by directly stimulating RAD51-mediated strand exchange activity. Not required to load RAD51 at sites of DNA damage but promotes recombinational repair after RAD51 recruitment. Also promotes HR by positively regulating EXO1-mediated DNA end resection of DNA double-strand breaks. Required for recruitment of replication protein RPA2 to DNA damage sites. Promotes the initiation of the G2/M checkpoint but not its maintenance. Catalyzes Holliday junction branch migration and dissociation of D-loops and DNA flaps. This is 5'-3' DNA helicase ZGRF1 (Zgrf1) from Mus musculus (Mouse).